The chain runs to 90 residues: UPF0298 protein RBAM_014860 (90 aa).

The protein belongs to the UPF0298 family.

The protein localises to the cytoplasm. In Bacillus velezensis (strain DSM 23117 / BGSC 10A6 / LMG 26770 / FZB42) (Bacillus amyloliquefaciens subsp. plantarum), this protein is UPF0298 protein RBAM_014860.